Consider the following 255-residue polypeptide: Post-GPI attachment to proteins factor 2 (255 aa).

Helical transmembrane passes span 23–43 (LALVALSLPLGGFFFCVIWSL), 111–131 (LGILACFLNVVEDLALFCLSF), 143–163 (NAFVVFIACSECYMLVSYLLN), 185–205 (LFLVNVIAFGLAGYCFVRHNS), and 209–229 (AGVYTFFALFEYIVVLTNMGF).

This sequence belongs to the PGAP2 family.

The protein resides in the golgi apparatus membrane. It localises to the endoplasmic reticulum membrane. In terms of biological role, involved in the lipid remodeling steps of GPI-anchor maturation. Required for stable expression of GPI-anchored proteins at the cell surface. This Drosophila melanogaster (Fruit fly) protein is Post-GPI attachment to proteins factor 2.